Reading from the N-terminus, the 551-residue chain is Serendipity locus protein alpha (551 aa).

Its subcellular location is the cytoplasm. The protein localises to the cell membrane. Its function is as follows. Required for the cellularization of the syncytial blastoderm embryo. Involved in the localization of the actin filaments just prior to and during plasma membrane invagination. Sry-alpha together with nullo and bnk may provide auxiliary functions, by acting both to stabilize a large and dynamic microfilament structure and regulate its functions. The polypeptide is Serendipity locus protein alpha (Sry-alpha) (Drosophila pseudoobscura pseudoobscura (Fruit fly)).